Here is a 365-residue protein sequence, read N- to C-terminus: Ribosomal RNA large subunit methyltransferase F (365 aa).

Low complexity-rich tracts occupy residues 1–18 and 30–42; these read MPKP…SPAG and AKLK…AASK. Positions 1–50 are disordered; that stretch reads MPKPAIKTAAKPATSPAGKRAKPNTPQSVAKLKASTAKAASKPKAKLGEK.

Belongs to the methyltransferase superfamily. METTL16/RlmF family.

The protein resides in the cytoplasm. The catalysed reaction is adenosine(1618) in 23S rRNA + S-adenosyl-L-methionine = N(6)-methyladenosine(1618) in 23S rRNA + S-adenosyl-L-homocysteine + H(+). Functionally, specifically methylates the adenine in position 1618 of 23S rRNA. This chain is Ribosomal RNA large subunit methyltransferase F, found in Shewanella oneidensis (strain ATCC 700550 / JCM 31522 / CIP 106686 / LMG 19005 / NCIMB 14063 / MR-1).